A 493-amino-acid chain; its full sequence is Glutamyl-tRNA(Gln) amidotransferase subunit A (493 aa).

Active-site charge relay system residues include Lys79 and Ser159. Ser183 functions as the Acyl-ester intermediate in the catalytic mechanism.

It belongs to the amidase family. GatA subfamily. As to quaternary structure, heterotrimer of A, B and C subunits.

It catalyses the reaction L-glutamyl-tRNA(Gln) + L-glutamine + ATP + H2O = L-glutaminyl-tRNA(Gln) + L-glutamate + ADP + phosphate + H(+). Allows the formation of correctly charged Gln-tRNA(Gln) through the transamidation of misacylated Glu-tRNA(Gln) in organisms which lack glutaminyl-tRNA synthetase. The reaction takes place in the presence of glutamine and ATP through an activated gamma-phospho-Glu-tRNA(Gln). The polypeptide is Glutamyl-tRNA(Gln) amidotransferase subunit A (Brucella abortus (strain S19)).